A 504-amino-acid polypeptide reads, in one-letter code: Probable cytochrome P450 6a21 (504 aa).

C449 is a binding site for heme.

It belongs to the cytochrome P450 family. Requires heme as cofactor.

The protein localises to the endoplasmic reticulum membrane. The protein resides in the microsome membrane. Its function is as follows. May be involved in the metabolism of insect hormones and in the breakdown of synthetic insecticides. This is Probable cytochrome P450 6a21 (Cyp6a21) from Drosophila melanogaster (Fruit fly).